The primary structure comprises 535 residues: BAR/IMD domain-containing adapter protein 2 (535 aa).

The region spanning 1-250 is the IMD domain; it reads MSLSRSEEMH…VQLMQQMANS (250 aa). Positions 88–153 form a coiled coil; it reads NQLEETLKSF…LRKKSQGSKN (66 aa). 4 positions are modified to phosphoserine: Ser262, Ser324, Ser326, and Ser337. The interval 299–370 is disordered; it reads VMNGVAGPDS…TLPRSSSMAA (72 aa). Positions 321–335 are enriched in low complexity; that stretch reads QPKSLSPPQSQSKLS. Thr341 carries the phosphothreonine modification. The residue at position 347 (Ser347) is a Phosphoserine. Residues 349 to 368 show a composition bias toward polar residues; it reads TPKNSYATTENKTLPRSSSM. Thr361 bears the Phosphothreonine mark. Residues Ser367, Ser385, Ser396, and Ser455 each carry the phosphoserine modification. The SH3 domain occupies 375–438; sequence NGRMRVKAIF…PFSYTRVLDS (64 aa). Residues 445–477 are disordered; that stretch reads HMSLQQGKSSSTGNLLDKDDLALPPPDYGTSSR. The span at 447–458 shows a compositional bias: polar residues; sequence SLQQGKSSSTGN.

Homodimer. Interacts with CDC42 and RAC1 that have been activated by GTP binding. Binds DIAPH1. Interacts with ATN1, ADGRB1, SHANK1, SHANK2, SHANK3, TIAM1, WASF1 and WASF2. Interacts with ENAH after recruitment of CDC42. Interacts with EPS8. Phosphorylated on tyrosine residues by INSR in response to insulin treatment. As to expression, detected in liver, brain, olfactory bulb, brain cortex, caudate putamen, hypothalamus and cerebellum.

The protein resides in the cytoplasm. It is found in the membrane. It localises to the cell projection. Its subcellular location is the filopodium. The protein localises to the ruffle. The protein resides in the cytoskeleton. Its function is as follows. Adapter protein that links membrane-bound small G-proteins to cytoplasmic effector proteins. Necessary for CDC42-mediated reorganization of the actin cytoskeleton and for RAC1-mediated membrane ruffling. Involved in the regulation of the actin cytoskeleton by WASF family members and the Arp2/3 complex. Plays a role in neurite growth. Acts syngeristically with ENAH to promote filipodia formation. Plays a role in the reorganization of the actin cytoskeleton in response to bacterial infection. Participates in actin bundling when associated with EPS8, promoting filopodial protrusions. The polypeptide is BAR/IMD domain-containing adapter protein 2 (Baiap2) (Mus musculus (Mouse)).